The chain runs to 187 residues: Interferon alpha-3 (187 aa).

The signal sequence occupies residues 1–23; it reads MALPCSFSVALVLLSCHSLCCLA. 2 disulfides stabilise this stretch: Cys24–Cys122 and Cys52–Cys160. N-linked (GlcNAc...) asparagine glycans are attached at residues Asn94 and Asn101.

This sequence belongs to the alpha/beta interferon family.

Its subcellular location is the secreted. Produced by macrophages, IFN-alpha have antiviral activities. Interferon stimulates the production of two enzymes: a protein kinase and an oligoadenylate synthetase. The protein is Interferon alpha-3 of Canis lupus familiaris (Dog).